Consider the following 65-residue polypeptide: Large ribosomal subunit protein bL35 (65 aa).

It belongs to the bacterial ribosomal protein bL35 family.

The polypeptide is Large ribosomal subunit protein bL35 (Agathobacter rectalis (strain ATCC 33656 / DSM 3377 / JCM 17463 / KCTC 5835 / VPI 0990) (Eubacterium rectale)).